Reading from the N-terminus, the 649-residue chain is Choline transporter-like protein 3 (649 aa).

The chain crosses the membrane as a helical span at residues 33–53; that stretch reads AWLFLFFLFWTGLVFIMGYSV. N-linked (GlcNAc...) asparagine glycans are attached at residues asparagine 136 and asparagine 151. Transmembrane regions (helical) follow at residues 213–233, 235–255, 284–304, 334–354, and 384–404; these read DTVLGLCILAFALSLAMMFTF, FITTLLVHIFIALIVLGLLFV, LLGFAIVSTVITAVLLILIYV, LWTFAILIFFWVLWVAVLLSL, and LIGLIWTSEFILACQQMAVAG. N-linked (GlcNAc...) asparagine glycans are attached at residues asparagine 414, asparagine 502, and asparagine 520. Helical transmembrane passes span 533 to 553 and 562 to 582; these read FIIFLGKVLVVCFTVFGGLMA and VWAVPLLLVAFFAYLVAHSFL.

This sequence belongs to the CTL (choline transporter-like) family.

It localises to the membrane. The sequence is that of Choline transporter-like protein 3 (SLC44A3) from Bos taurus (Bovine).